Reading from the N-terminus, the 259-residue chain is Eukaryotic translation initiation factor 3 subunit J (259 aa).

A compositionally biased stretch (low complexity) spans 1–12 (MAAAAAAAAGDS). Residues 1-70 (MAAAAAAAAG…KEEAEVKPEV (70 aa)) are sufficient for interaction with EIF3B. The disordered stretch occupies residues 1–111 (MAAAAAAAAG…EPEEPKVLTP (111 aa)). S12, S14, and S21 each carry phosphoserine. Residues 41-60 (EGEDEDEDVKDNWDDDDDEK) show a composition bias toward acidic residues. The segment covering 61–107 (KEEAEVKPEVKISEKKKIAEKIKEKERQQKKRQEEIKKRLEEPEEPK) has biased composition (basic and acidic residues). A coiled-coil region spans residues 71–136 (KISEKKKIAE…ESDLELAKET (66 aa)). K107 is covalently cross-linked (Glycyl lysine isopeptide (Lys-Gly) (interchain with G-Cter in SUMO2)). Residue T110 is modified to Phosphothreonine. S128 is subject to Phosphoserine. Residues 218–247 (SKAKKKKKGVVPGGGLKATMKDDLADYGGY) are disordered. The promotes stable association with the 40S ribosome stretch occupies residues 244–259 (YGGYDGGYVQDYEDFM). A Phosphotyrosine modification is found at Y255.

It belongs to the eIF-3 subunit J family. As to quaternary structure, component of the eukaryotic translation initiation factor 3 (eIF-3) complex, which is composed of 13 subunits: EIF3A, EIF3B, EIF3C, EIF3D, EIF3E, EIF3F, EIF3G, EIF3H, EIF3I, EIF3J, EIF3K, EIF3L and EIF3M. The eIF-3 complex appears to include 3 stable modules: module A is composed of EIF3A, EIF3B, EIF3G and EIF3I; module B is composed of EIF3F, EIF3H, and EIF3M; and module C is composed of EIF3C, EIF3D, EIF3E, EIF3K and EIF3L. EIF3C of module C binds EIF3B of module A and EIF3H of module B, thereby linking the three modules. EIF3J is a labile subunit that binds to the eIF-3 complex via EIF3B. The eIF-3 complex interacts with RPS6KB1 under conditions of nutrient depletion. Mitogenic stimulation leads to binding and activation of a complex composed of MTOR and RPTOR, leading to phosphorylation and release of RPS6KB1 and binding of EIF4B to eIF-3. Phosphorylated. Phosphorylation is enhanced upon serum stimulation.

It localises to the cytoplasm. In terms of biological role, component of the eukaryotic translation initiation factor 3 (eIF-3) complex, which is required for several steps in the initiation of protein synthesis. The eIF-3 complex associates with the 40S ribosome and facilitates the recruitment of eIF-1, eIF-1A, eIF-2:GTP:methionyl-tRNAi and eIF-5 to form the 43S pre-initiation complex (43S PIC). The eIF-3 complex stimulates mRNA recruitment to the 43S PIC and scanning of the mRNA for AUG recognition. The eIF-3 complex is also required for disassembly and recycling of post-termination ribosomal complexes and subsequently prevents premature joining of the 40S and 60S ribosomal subunits prior to initiation. The eIF-3 complex specifically targets and initiates translation of a subset of mRNAs involved in cell proliferation, including cell cycling, differentiation and apoptosis, and uses different modes of RNA stem-loop binding to exert either translational activation or repression. This subunit binds directly within the mRNA entry channel of the 40S ribosome to the aminoacyl (A) site. It may regulate the interaction between the 43S PIC and mRNA. The polypeptide is Eukaryotic translation initiation factor 3 subunit J (Pongo abelii (Sumatran orangutan)).